A 351-amino-acid chain; its full sequence is High-affinity nickel transport protein (351 aa).

Residues 1-19 (MFQLLAGVRMNSTGRPRAK) lie on the Cytoplasmic side of the membrane. Residues 20 to 40 (IILLYALLIAFNIGAWLCALA) traverse the membrane as a helical segment. Topologically, residues 41 to 51 (AFRDHPVLLGT) are periplasmic. A helical membrane pass occupies residues 52–72 (ALLAYGLGLRHAVDADHLAAI). Residues 73 to 94 (DNVTRKLMQDGRRPITAGLWFS) lie on the Cytoplasmic side of the membrane. The chain crosses the membrane as a helical span at residues 95 to 115 (LGHSSVVVLASVLIAVMATTL). Over 116 to 128 (QERLDAFHEVGSV) the chain is Periplasmic. The helical transmembrane segment at 129 to 149 (IGTLASALFLFAIAAINLVIL) threads the bilayer. Over 150–199 (RSAYRAFRRVRRGGIYVEEDFDLLFGNRGFLARIFRPLFRFITRSWHMYP) the chain is Cytoplasmic. Residues 200-220 (LGMLFALGFDTATEVALLGIS) traverse the membrane as a helical segment. Topologically, residues 221–243 (TMEASRGVPIWSILVFPALFTAG) are periplasmic. Residues 244-264 (MALIDTIDSILMCGAYAWAYA) traverse the membrane as a helical segment. The Cytoplasmic segment spans residues 265–269 (KPVRK). Residues 270-290 (LYYNMTITFVSAIVALIVGGI) form a helical membrane-spanning segment. Residues 291 to 316 (ETLGLLADKFMLKGVFWNAVGALNEN) are Periplasmic-facing. Residues 317 to 337 (FCQLGFVIIGIFTVCWVVSIV) traverse the membrane as a helical segment. Topologically, residues 338–351 (VYRLRRYDDSEVRA) are cytoplasmic.

It belongs to the NiCoT transporter (TC 2.A.52) family.

It is found in the cell inner membrane. In terms of biological role, high-affinity nickel transporter responsible for nickel uptake. Necessary for high levels of activity of hydrogenase and urease. Does not transport cobalt. This is High-affinity nickel transport protein (hoxN) from Cupriavidus necator (strain ATCC 17699 / DSM 428 / KCTC 22496 / NCIMB 10442 / H16 / Stanier 337) (Ralstonia eutropha).